Consider the following 313-residue polypeptide: MGVKSFVEGGIASVIAGCSTHPLDLIKVRLQLHGEAPSTTTVTLLRPALAFPNSSPAAFLETTSSVPKVGPISLGINIVKSEGAAALFSGVSATLLRQTLYSTTRMGLYEVLKNKWTDPESGKLNLSRKIGAGLVAGGIGAAVGNPADVAMVRMQADGRLPLAQRRNYAGVGDAIRSMVKGEGVTSLWRGSALTINRAMIVTAAQLASYDQFKEGILENGVMNDGLGTHVVASFAAGFVASVASNPVDVIKTRVMNMKVGAYDGAWDCAVKTVKAEGAMALYKGFVPTVCRQGPFTVVLFVTLEQVRKLLRDF.

Solcar repeat units follow at residues lysine 4 to lysine 115, leucine 124 to glycine 215, and aspartate 224 to leucine 309. A run of 6 helical transmembrane segments spans residues phenylalanine 6 to isoleucine 26, alanine 84 to threonine 104, isoleucine 130 to alanine 150, arginine 189 to tyrosine 209, valine 230 to isoleucine 250, and tyrosine 282 to threonine 302.

Belongs to the mitochondrial carrier (TC 2.A.29) family. Expressed in roots, leaves, stems and flowers.

The protein resides in the mitochondrion inner membrane. Functionally, PUMPS are mitochondrial transporter proteins that create proton leaks across the inner mitochondrial membrane, thus uncoupling oxidative phosphorylation. This leads to a decrease in the efficiency of oxidative phosphorylation and an increase in heat production. May be involved in protecting plant cells against oxidative stress damage. Recombinant PUMP4, reconstituted into liposomes, transports a wide range of dicarboxylic acids including malate, oxaloacetate and succinate as well as phosphate, sulfate and thiosulfate. However, it is unknown if these transports are of any biological significance in vivo. The polypeptide is Mitochondrial uncoupling protein 4 (PUMP4) (Arabidopsis thaliana (Mouse-ear cress)).